The following is a 249-amino-acid chain: E3 ubiquitin-protein ligase RMA1 (249 aa).

The segment at cysteine 48–lysine 97 adopts an RING-type zinc-finger fold. A helical; Anchor for type IV membrane protein transmembrane segment spans residues leucine 231–leucine 248.

Ubiquitous. Highly expressed in roots.

The protein resides in the endoplasmic reticulum membrane. It catalyses the reaction S-ubiquitinyl-[E2 ubiquitin-conjugating enzyme]-L-cysteine + [acceptor protein]-L-lysine = [E2 ubiquitin-conjugating enzyme]-L-cysteine + N(6)-ubiquitinyl-[acceptor protein]-L-lysine.. It functions in the pathway protein modification; protein ubiquitination. Functionally, E3 ubiquitin-protein ligase that promotes the ubiquitination and proteasomal degradation of aquaporin PIP2-1. Forms a ubiquitin ligase complex in cooperation with the E2 enzymes UCB8/UCB10. The chain is E3 ubiquitin-protein ligase RMA1 (RMA1) from Arabidopsis thaliana (Mouse-ear cress).